The chain runs to 185 residues: Peptidyl-tRNA hydrolase (185 aa).

Tyr-14 contacts tRNA. The active-site Proton acceptor is the His-19. TRNA-binding residues include Tyr-65, Asn-67, and Asn-113.

Belongs to the PTH family. As to quaternary structure, monomer.

It localises to the cytoplasm. It carries out the reaction an N-acyl-L-alpha-aminoacyl-tRNA + H2O = an N-acyl-L-amino acid + a tRNA + H(+). Hydrolyzes ribosome-free peptidyl-tRNAs (with 1 or more amino acids incorporated), which drop off the ribosome during protein synthesis, or as a result of ribosome stalling. Functionally, catalyzes the release of premature peptidyl moieties from peptidyl-tRNA molecules trapped in stalled 50S ribosomal subunits, and thus maintains levels of free tRNAs and 50S ribosomes. The polypeptide is Peptidyl-tRNA hydrolase (Rickettsia typhi (strain ATCC VR-144 / Wilmington)).